Reading from the N-terminus, the 60-residue chain is MAVPRNRHSNARKNIRRSHHAKQARHAAVCNNCKQAFIPHTVCTSCGFYNGKAVMTVEKK.

Residues 1–23 (MAVPRNRHSNARKNIRRSHHAKQ) form a disordered region.

It belongs to the bacterial ribosomal protein bL32 family.

The protein is Large ribosomal subunit protein bL32 of Chlamydia abortus (strain DSM 27085 / S26/3) (Chlamydophila abortus).